Consider the following 898-residue polypeptide: MAETTVKKLADIVGTPVEKLLTQMKDAGLPHGDASEVVSDEQKQQLLAHLRKSHGAEDEGSGKKITLKRKSTSTIKTTGAAGKSKTVNVEVRKKRTYMKRDVVEAEEREEAERLAAEEAARIAEEEKRAAQEAAKRAADDEAARLKEDEARAKAEQERKAAGEKAAEEKSKRVSVPKVSATKKPAKEETPEEKAKREEAERKQREADEAKRKQEAEARKKAEEEAARRTAEEAARIAAELEQRGEQEEKKPAVEDDKGSSIVNAAQEASYQREERQSRRRRRKPKVAGVVHGKMKSSMNKQHGFKTPTEKKIYEVEVPETITVGDLAQRMNIKAKSLIKSLMKMGEMATVNQPIDQETAFLLVEEMGHKPVASKGQEELLEDHLAADLVTRDSVDSEHRAPVVTIMGHVDHGKTSLLDYIRKAKVASGEAGGITQHIGAYHVEHEKGMITFLDTPGHAAFTAMRARGAKATDIVVIVVAADDGVMPQTEEAINHAKASGAPIIIAVNKIDKEQADPDRVRNELATKDVIPEEWGGEYQFINVSAHSGEGVDDLLDAILLQSELLELQAQASGSATGVVIESRIEKGRGTVASILVQGGELQIGDMLLAGAHFGRVRAMVDENGKAIKKAGPSIPVEVLGLNGAPEAGEQIQVVTDERKAREVAEFRQERDRELKLKRQQASKLENLFENMGSAETKTVNIVLKTDVRGSLEALTSALNDLGTDEVKVNLVSSGVGAINESDVNLAMTSEGVLLGFNVRADSKAKRVCEQEGIDLRYYSVIYELIDDVKQAMSGLLAPEKREEILGVAQVRDVFRSSKFGAVAGCMVVEGTLYRNRPIRVLRDDVVVFEGELESLRRFKDDVPEVRNGMECGIAVKSYNDVKEGDKIEVFEVKEVARFL.

Disordered regions lie at residues 51–70 and 114–303; these read RKSH…LKRK and LAAE…KQHG. 2 stretches are compositionally biased toward basic and acidic residues: residues 114–171 and 184–258; these read LAAE…EKSK and PAKE…DDKG. The 170-residue stretch at 398–567 folds into the tr-type G domain; the sequence is HRAPVVTIMG…LLQSELLELQ (170 aa). Positions 407–414 are G1; the sequence is GHVDHGKT. A GTP-binding site is contributed by 407 to 414; it reads GHVDHGKT. Residues 432 to 436 are G2; that stretch reads GITQH. The G3 stretch occupies residues 453–456; sequence DTPG. Residues 453 to 457 and 507 to 510 contribute to the GTP site; these read DTPGH and NKID. The tract at residues 507–510 is G4; the sequence is NKID. Residues 543 to 545 are G5; the sequence is SAH.

This sequence belongs to the TRAFAC class translation factor GTPase superfamily. Classic translation factor GTPase family. IF-2 subfamily.

Its subcellular location is the cytoplasm. Its function is as follows. One of the essential components for the initiation of protein synthesis. Protects formylmethionyl-tRNA from spontaneous hydrolysis and promotes its binding to the 30S ribosomal subunits. Also involved in the hydrolysis of GTP during the formation of the 70S ribosomal complex. The chain is Translation initiation factor IF-2 from Alcanivorax borkumensis (strain ATCC 700651 / DSM 11573 / NCIMB 13689 / SK2).